We begin with the raw amino-acid sequence, 445 residues long: Argininosuccinate lyase (445 aa).

It belongs to the lyase 1 family. Argininosuccinate lyase subfamily.

It localises to the cytoplasm. The catalysed reaction is 2-(N(omega)-L-arginino)succinate = fumarate + L-arginine. The protein operates within amino-acid biosynthesis; L-arginine biosynthesis; L-arginine from L-ornithine and carbamoyl phosphate: step 3/3. The protein is Argininosuccinate lyase of Xylella fastidiosa (strain 9a5c).